The primary structure comprises 584 residues: Cationic amino acid transporter 7, chloroplastic (584 aa).

A chloroplast-targeting transit peptide spans 1–49 (MEAQYRNHDGDTSFSSLRVYLNSLSDTPSRFSRRAVSVSTSYDEMSRVR). The next 14 membrane-spanning stretches (helical) occupy residues 62–82 (WYDL…FVTT), 90–110 (AGPS…LSAF), 131–151 (ITFG…DYVL), 185–205 (GFNE…FVIC), 214–234 (VNMV…VMGF), 254–274 (FFPF…LSYI), 293–313 (IPMG…LMAI), 346–366 (VVGI…MLGQ), 396–416 (ASAF…LNVL), 417–437 (LNLV…AVIF), 449–469 (WPTL…TLVW), 480–500 (FILG…HCVV), 508–528 (FWGV…NIFL), and 540–560 (FGFF…HASY).

Belongs to the amino acid-polyamine-organocation (APC) superfamily. Cationic amino acid transporter (CAT) (TC 2.A.3.3) family.

The protein resides in the plastid. It localises to the chloroplast membrane. Permease involved in the transport of the cationic amino acids. This is Cationic amino acid transporter 7, chloroplastic (CAT7) from Arabidopsis thaliana (Mouse-ear cress).